The sequence spans 489 residues: Rhamnulokinase (489 aa).

Residue 13 to 17 (ASSGR) coordinates ATP. Cysteine 68 and cysteine 222 form a disulfide bridge. Substrate-binding positions include glycine 83 and 236 to 238 (HDT). Catalysis depends on aspartate 237, which acts as the Proton acceptor. An ATP-binding site is contributed by threonine 259. Asparagine 296 is a binding site for substrate. Glutamine 304 provides a ligand contact to ATP. The cysteines at positions 353 and 370 are disulfide-linked. Position 402 (glycine 402) interacts with ATP. Cysteines 413 and 417 form a disulfide.

This sequence belongs to the rhamnulokinase family. In terms of assembly, monomer. The cofactor is Mg(2+).

It carries out the reaction L-rhamnulose + ATP = L-rhamnulose 1-phosphate + ADP + H(+). The protein operates within carbohydrate degradation; L-rhamnose degradation; glycerone phosphate from L-rhamnose: step 2/3. Involved in the catabolism of L-rhamnose (6-deoxy-L-mannose). Catalyzes the transfer of the gamma-phosphate group from ATP to the 1-hydroxyl group of L-rhamnulose to yield L-rhamnulose 1-phosphate. In Escherichia coli O17:K52:H18 (strain UMN026 / ExPEC), this protein is Rhamnulokinase.